A 145-amino-acid chain; its full sequence is Protein FAM216B (145 aa).

Positions 92-121 are disordered; the sequence is TKRASAKAGPHRTVPQRAAGRTRTQPSARP.

It belongs to the FAM216 family.

In Bos taurus (Bovine), this protein is Protein FAM216B (FAM216B).